Consider the following 126-residue polypeptide: Aspartate 1-decarboxylase (126 aa).

Catalysis depends on Ser-25, which acts as the Schiff-base intermediate with substrate; via pyruvic acid. Ser-25 is subject to Pyruvic acid (Ser). Thr-57 lines the substrate pocket. Tyr-58 serves as the catalytic Proton donor. 73 to 75 (GSA) is a binding site for substrate.

The protein belongs to the PanD family. Heterooctamer of four alpha and four beta subunits. Pyruvate serves as cofactor. In terms of processing, is synthesized initially as an inactive proenzyme, which is activated by self-cleavage at a specific serine bond to produce a beta-subunit with a hydroxyl group at its C-terminus and an alpha-subunit with a pyruvoyl group at its N-terminus.

It localises to the cytoplasm. The catalysed reaction is L-aspartate + H(+) = beta-alanine + CO2. It participates in cofactor biosynthesis; (R)-pantothenate biosynthesis; beta-alanine from L-aspartate: step 1/1. Functionally, catalyzes the pyruvoyl-dependent decarboxylation of aspartate to produce beta-alanine. The polypeptide is Aspartate 1-decarboxylase (Acidovorax ebreus (strain TPSY) (Diaphorobacter sp. (strain TPSY))).